The chain runs to 289 residues: MEQPGPRAPDPSLCHHNLQPTDDPNWDSYATTMRTAFTPKTGAVPALIRQNGIRRLGYTYSLSDPILNQTQYSDEYTWKSHSKEDLIKTETSRGIKSHKSHLNEDIFLWTLPHCQQTGTLKNCLPWKIPASMKEVNKALSNQFISLTKRDFVDRSKAQKIKKSSHLSLEWKKLLPQPPDTEFRRNYQIPAKIPELQDFSFKYGCYSSLPVASQGLVPSVLHSYLRNQEHTKKQTTYQSDYDKTYPDFLMLLNSFTSSQVKEYLQSLSYKDRQIIDRFIRTHCDTNKKKK.

The disordered stretch occupies residues 1–26; that stretch reads MEQPGPRAPDPSLCHHNLQPTDDPNW. Mn regions lie at residues 30 to 42, 69 to 83, 144 to 157, 179 to 193, and 233 to 247; these read ATTMRTAFTPKTG, QTQYSDEYTWKSHSK, ISLTKRDFVDRSKA, DTEFRRNYQIPAKIP, and QTTYQSDYDKTYPDF.

In Homo sapiens (Human), this protein is Testis-expressed protein 26 (TEX26).